A 1111-amino-acid polypeptide reads, in one-letter code: MEIAAKSNSKRMYSWWWDSHNTPKNSKWLQDNLADMDSNVKQMIKVLEEDADSFARRAEMYYRKRPELMKLVEEFYRAYRALAERYNHATGVIHKAHETIAEAFPNQVPLIFGDESHGGALTNDVDPQTPDMPPPFRARGNPDEFQQDALGFSLSHVHDVKRNIDFSEEPLFVSNGKARKGLNFNDHGDGKGRNGLKDHILSESERASKAEAEVVALKDSLSKMQAEKQASLALFEKNLERLSNLESEVSRAQADSRGINDRAASAEAEIQTLRETLYKLESEKESSFLQYHKCLQKIADLEDGLSVAHKEAGERASKAETETLALKRSLAKAETDKETALIQYRQCLNTISNLEERLRKAEEDARLINERAEKAGVEVENLKQTVSKLIKDKEASELQFQQCLNIIASLKVKLHHAQEETQSLSHEIEDGVAKLKFSEEKCLLLERSNQNLHSELDSLLEKLGNQSQKLTEKQTELVKLWSCVQAEHLHFQEAETAFQTLQQLHSQSQEELNNLAVELQTVSQIMKDMEMRNNELHEELEQAKVENKGLNDLNFTMEKLVQKNLMLEKSISYLNSELESFRRKLKTFEEACQSLSEEKSCLISENQHNVIENTVLIEWLRQLRLEAVGIATEKTDLEGKAKTIGDKLTDAETENLQLKRNLLSIRSEKHHLEDEITNVKDQLHEKEKEFEEIKMEKEKLIQEVFKERKQVELWESQAATFFCDKQISVVHETLIEATTRELAEACKNLESKSASRDADIEKLKRSQTIVLLNESIKSLEDYVFTHRESAGEVSKGADLMDEFLKLEGMCLRIKAIAEAIMEKEKFLMLENTNTYSMLEASLKQIKELKTGGGRSMRKQDGGSGRMRKQSHETEMVMKDIVLDQTSDGSSYEIVSKKGNSELDHLGFVELKPVKTHKTETKALSEESLIVEKVEIFDGFMDPNREVNKRRVLERLDSDLQKLENLQITVEDLKSKVETVEKEKTKVGENEYKTIKGQLEEGEEAIEKLFTVNRKLTTKAESEKDIDRRRRIFEHARRGTEKIGRLQSEIQRIQFLLMKLEGEREHRLRSKISDTKVLLRDYIYGRTRSVSMKKRTKKRSVFCGCVQQPESP.

The NAB domain maps to Tyr13–Ile93. Coiled coils occupy residues Ser202–Ser287, Glu314–Glu605, and Lys642–Lys752. The interval Thr850–Ser870 is disordered. Residues Asn943–Phe1009 are a coiled coil.

It belongs to the NET family.

In terms of biological role, plant-specific actin binding protein. May be part of a membrane-cytoskeletal adapter complex. In Arabidopsis thaliana (Mouse-ear cress), this protein is Protein NETWORKED 1C.